Consider the following 286-residue polypeptide: Putative 2-aminoethylphosphonate transport system permease protein PhnU (286 aa).

Helical transmembrane passes span 19–39, 76–96, 111–131, 150–170, 202–222, and 254–274; these read WLLL…SLIV, FFAT…LVFI, FIAL…GSAG, FLYS…PLVM, VIFP…LLLT, and YTVA…LFSL. The ABC transmembrane type-1 domain maps to 68–275; the sequence is LLNTLQIAFF…VLSLGLFSLY (208 aa).

This sequence belongs to the binding-protein-dependent transport system permease family.

It is found in the cell inner membrane. Probably part of the PhnSTUV complex (TC 3.A.1.11.5) involved in 2-aminoethylphosphonate import. Probably responsible for the translocation of the substrate across the membrane. The chain is Putative 2-aminoethylphosphonate transport system permease protein PhnU (phnU) from Salmonella typhimurium (strain LT2 / SGSC1412 / ATCC 700720).